Reading from the N-terminus, the 432-residue chain is Glutamate--tRNA ligase 2 (432 aa).

Positions 6 to 16 match the 'HIGH' region motif; it reads PSPTGDMHIGN. A 'KMSKS' region motif is present at residues 235 to 239; sequence KMSKR. ATP is bound at residue Lys238.

It belongs to the class-I aminoacyl-tRNA synthetase family. Glutamate--tRNA ligase type 1 subfamily. Monomer.

It is found in the cytoplasm. It catalyses the reaction tRNA(Glu) + L-glutamate + ATP = L-glutamyl-tRNA(Glu) + AMP + diphosphate. In terms of biological role, catalyzes the attachment of glutamate to tRNA(Glu) in a two-step reaction: glutamate is first activated by ATP to form Glu-AMP and then transferred to the acceptor end of tRNA(Glu). This is Glutamate--tRNA ligase 2 from Sulfurimonas denitrificans (strain ATCC 33889 / DSM 1251) (Thiomicrospira denitrificans (strain ATCC 33889 / DSM 1251)).